We begin with the raw amino-acid sequence, 209 residues long: Uracil phosphoribosyltransferase (209 aa).

5-phospho-alpha-D-ribose 1-diphosphate-binding positions include R79, R104, and 131–139; that span reads DPMLATGHS. Uracil-binding positions include I194 and 199-201; that span reads GDA. A 5-phospho-alpha-D-ribose 1-diphosphate-binding site is contributed by D200.

This sequence belongs to the UPRTase family. Requires Mg(2+) as cofactor.

The enzyme catalyses UMP + diphosphate = 5-phospho-alpha-D-ribose 1-diphosphate + uracil. Its pathway is pyrimidine metabolism; UMP biosynthesis via salvage pathway; UMP from uracil: step 1/1. Allosterically activated by GTP. Its function is as follows. Catalyzes the conversion of uracil and 5-phospho-alpha-D-ribose 1-diphosphate (PRPP) to UMP and diphosphate. In Caulobacter vibrioides (strain ATCC 19089 / CIP 103742 / CB 15) (Caulobacter crescentus), this protein is Uracil phosphoribosyltransferase.